The primary structure comprises 763 residues: Thyrotropin receptor (763 aa).

An N-terminal signal peptide occupies residues 1–21; sequence MRPTPLLRLALFLVLPSSLGG. Residues 22–412 are Extracellular-facing; that stretch reads ERCPSPPCEC…EFNPCEDIMG (391 aa). A disulfide bridge connects residues cysteine 31 and cysteine 41. One copy of the LRR 1 repeat lies at 51-74; that stretch reads PPSTQTLKFIETHLKTIPSRAFSN. 2 N-linked (GlcNAc...) asparagine glycosylation sites follow: asparagine 77 and asparagine 99. 5 LRR repeats span residues 125 to 150, 151 to 174, 176 to 199, 201 to 223, and 225 to 248; these read LPLL…IYST, DVFF…AFQG, CNET…AFNG, KLDA…AFAG, and YSGP…GLEH. N-linked (GlcNAc...) asparagine glycans are attached at residues asparagine 177 and asparagine 198. An N-linked (GlcNAc...) asparagine glycan is attached at asparagine 302. Tyrosine 384 is subject to Sulfotyrosine. A helical transmembrane segment spans residues 413-440; the sequence is YKFLRIVVWFVSLLALLGNVFVLVILLT. Over 441–449 the chain is Cytoplasmic; it reads SHYKLTVPR. A helical transmembrane segment spans residues 450–472; the sequence is FLMCNLAFADFCMGLYLLLIASV. The Extracellular segment spans residues 473 to 493; it reads DLYTQSEYYNHAIDWQTGPGC. An intrachain disulfide couples cysteine 493 to cysteine 568. The helical transmembrane segment at 494–516 threads the bilayer; it reads NTAGFFTVFASELSVYTLTVITL. The Cytoplasmic portion of the chain corresponds to 517-536; the sequence is ERWHAITFAMRLDRKIRLWH. The chain crosses the membrane as a helical span at residues 537 to 559; sequence AYVIMLGGWVCCFLLALLPLVGI. The Extracellular segment spans residues 560–579; the sequence is SSYAKVSICLPMDTETPLAL. Residues 580–601 form a helical membrane-spanning segment; it reads AYIILVLLLNIIAFIIVCACYV. The Cytoplasmic portion of the chain corresponds to 602–624; that stretch reads KIYITVRNPHYNPGDKDTRIAKR. Residues 625–648 form a helical membrane-spanning segment; sequence MAVLIFTDFMCMAPISFYALSALM. At 649–659 the chain is on the extracellular side; that stretch reads NKPLITVTNSK. Residues 660 to 681 form a helical membrane-spanning segment; the sequence is ILLVLFYPLNSCANPFLYAIFT. Residues 682–763 lie on the Cytoplasmic side of the membrane; it reads KAFQRDVFML…TSKEYKRTVL (82 aa). Residues 742-763 are disordered; the sequence is ENSHLTPKQQDQTSKEYKRTVL. Over residues 744–753 the composition is skewed to polar residues; that stretch reads SHLTPKQQDQ. Positions 754–763 are enriched in basic and acidic residues; that stretch reads TSKEYKRTVL. The PDZ-binding motif lies at 761–763; sequence TVL.

It belongs to the G-protein coupled receptor 1 family. FSH/LSH/TSH subfamily. Interacts with heterodimer GPHA2:GPHB5; this interaction stimulates cAMP production. Interacts (via the PDZ-binding motif) with SCRIB; regulates TSHR trafficking and function. Post-translationally, glycosylated. Sulfated. Sulfation on Tyr-384 plays a role in thyrotropin receptor binding and activation.

It localises to the cell membrane. It is found in the basolateral cell membrane. Its function is as follows. Receptor for the thyroid-stimulating hormone (TSH) or thyrotropin. Also acts as a receptor for the heterodimeric glycoprotein hormone (GPHA2:GPHB5) or thyrostimulin. The activity of this receptor is mediated by G proteins which activate adenylate cyclase. Plays a central role in controlling thyroid cell metabolism. In Bos taurus (Bovine), this protein is Thyrotropin receptor (TSHR).